We begin with the raw amino-acid sequence, 454 residues long: tRNA modification GTPase MnmE (454 aa).

3 residues coordinate (6S)-5-formyl-5,6,7,8-tetrahydrofolate: Arg23, Glu80, and Lys120. A TrmE-type G domain is found at 216–377 (GMKVVIAGRP…LRNHLKQSMG (162 aa)). Asn226 is a binding site for K(+). Residues 226–231 (NAGKSS), 245–251 (TDIAGTT), 270–273 (DTAG), 335–338 (NKAD), and 358–360 (SAR) each bind GTP. Ser230 serves as a coordination point for Mg(2+). Residues Thr245, Ile247, and Thr250 each contribute to the K(+) site. Thr251 contributes to the Mg(2+) binding site. A (6S)-5-formyl-5,6,7,8-tetrahydrofolate-binding site is contributed by Lys454.

This sequence belongs to the TRAFAC class TrmE-Era-EngA-EngB-Septin-like GTPase superfamily. TrmE GTPase family. As to quaternary structure, homodimer. Heterotetramer of two MnmE and two MnmG subunits. K(+) is required as a cofactor.

Its subcellular location is the cytoplasm. Functionally, exhibits a very high intrinsic GTPase hydrolysis rate. Involved in the addition of a carboxymethylaminomethyl (cmnm) group at the wobble position (U34) of certain tRNAs, forming tRNA-cmnm(5)s(2)U34. The polypeptide is tRNA modification GTPase MnmE (Shigella boydii serotype 18 (strain CDC 3083-94 / BS512)).